A 227-amino-acid polypeptide reads, in one-letter code: Apoptosis regulator OPG045 (227 aa).

It belongs to the orthopoxvirus OPG045 family. Homodimer. Interacts with host pro-apoptotic protein BCL2L11 (via BH3 domain). Interacts with host NLRP1. Interacts with host BAK.

It is found in the host mitochondrion outer membrane. The protein resides in the host cytoplasm. In terms of biological role, plays a role in evading host innate immune response by inhibiting host inflammasome activation. Interacts with and inhibits NLR-mediated interleukin-1 beta/IL1B production in infected cells. At the host mitochondria outer membrane, interacts with the BH3 domain of host BAK and prevents BAK from binding active BAX. In turn, host apoptosis is inhibited. This chain is Apoptosis regulator OPG045 (OPG045), found in Oryctolagus cuniculus (Rabbit).